Consider the following 132-residue polypeptide: Small ribosomal subunit protein uS8 (132 aa).

The protein belongs to the universal ribosomal protein uS8 family. As to quaternary structure, part of the 30S ribosomal subunit. Contacts proteins S5 and S12.

Its function is as follows. One of the primary rRNA binding proteins, it binds directly to 16S rRNA central domain where it helps coordinate assembly of the platform of the 30S subunit. This is Small ribosomal subunit protein uS8 from Mycolicibacterium gilvum (strain PYR-GCK) (Mycobacterium gilvum (strain PYR-GCK)).